The chain runs to 66 residues: Venom peptide CtAPI (66 aa).

5 cysteine pairs are disulfide-bonded: C7-C44, C16-C40, C20-C33, C24-C64, and C46-C58. The 58-residue stretch at 7 to 64 (CEKDEEFVNCAPRCPQNCRNIRSYQPCLVLTPVCAPGCVCRSGKVKNDRGDCVSITDC) folds into the TIL domain.

This sequence belongs to the serine protease inhibitor-like (TIL domain-containing) family. In terms of tissue distribution, expressed by the venom gland.

The protein resides in the secreted. Functionally, serine protease inhibitor. In Chaerilus tricostatus (Scorpion), this protein is Venom peptide CtAPI.